Here is a 559-residue protein sequence, read N- to C-terminus: DNA ligase (559 aa).

Residue glutamate 231 participates in ATP binding. Lysine 233 (N6-AMP-lysine intermediate) is an active-site residue. Residues arginine 238 and glutamate 285 each coordinate ATP. Glutamate 285 and glutamate 379 together coordinate Mg(2+). Residues lysine 384 and lysine 399 each coordinate ATP.

Belongs to the ATP-dependent DNA ligase family. As to quaternary structure, interacts with host TOP2A and TOP2B. Mg(2+) serves as cofactor.

Its subcellular location is the host cytoplasm. The catalysed reaction is ATP + (deoxyribonucleotide)n-3'-hydroxyl + 5'-phospho-(deoxyribonucleotide)m = (deoxyribonucleotide)n+m + AMP + diphosphate.. DNA ligase that seals nicks in double-stranded DNA during DNA replication, DNA recombination and DNA repair. Recruits cellular topoisomerase II to sites of viral replication and assembly. This chain is DNA ligase (OPG180), found in Monkeypox virus.